The following is a 227-amino-acid chain: MKPARELTAFMDRLGYVFEDPALLARALTHSSLSSPTRGDNQRLEFLGDRVLGLVMAEAVLAADTDAKEGTLAPRFNALVRKEACADVARQIDLGAAMRLGKSEMSAGGRRRMALLGDAMEAVIAAVYLDGGFASARDLVLRLWSERVQSVEEDARDAKTALQEWAQARGMAPPTYTEVARSGPDHAPVFRVRVTLSSGENAEAQAKAKRQAEQQAAKDLLAQLAGE.

Residues 7-132 (LTAFMDRLGY…VIAAVYLDGG (126 aa)) form the RNase III domain. E45 is a Mg(2+) binding site. Residue D49 is part of the active site. 2 residues coordinate Mg(2+): D118 and E121. Residue E121 is part of the active site. The DRBM domain maps to 157–226 (DAKTALQEWA…AKDLLAQLAG (70 aa)).

Belongs to the ribonuclease III family. In terms of assembly, homodimer. It depends on Mg(2+) as a cofactor.

Its subcellular location is the cytoplasm. The catalysed reaction is Endonucleolytic cleavage to 5'-phosphomonoester.. In terms of biological role, digests double-stranded RNA. Involved in the processing of primary rRNA transcript to yield the immediate precursors to the large and small rRNAs (23S and 16S). Processes some mRNAs, and tRNAs when they are encoded in the rRNA operon. Processes pre-crRNA and tracrRNA of type II CRISPR loci if present in the organism. This Jannaschia sp. (strain CCS1) protein is Ribonuclease 3.